The chain runs to 518 residues: Probable bifunctional methylthioribulose-1-phosphate dehydratase/enolase-phosphatase E1 (518 aa).

The segment at 1–247 is methylthioribulose-1-phosphate dehydratase; the sequence is MAAAPPAVAV…AIKLHQIGLD (247 aa). Cys-119 serves as a coordination point for substrate. Zn(2+) is bound by residues His-137 and His-139. The Proton donor/acceptor; for methylthioribulose-1-phosphate dehydratase activity role is filled by Glu-162. A Zn(2+)-binding site is contributed by His-212. The enolase-phosphatase E1 stretch occupies residues 279-518; sequence IVLDIEGTTT…FKTITSFAEI (240 aa). Asp-282 and Glu-284 together coordinate Mg(2+). Substrate contacts are provided by residues 417–418 and Lys-451; that span reads SS. Asp-477 is a Mg(2+) binding site.

The protein in the N-terminal section; belongs to the aldolase class II family. MtnB subfamily. In the C-terminal section; belongs to the HAD-like hydrolase superfamily. MasA/MtnC family. Zn(2+) serves as cofactor. Requires Mg(2+) as cofactor.

It carries out the reaction 5-(methylsulfanyl)-D-ribulose 1-phosphate = 5-methylsulfanyl-2,3-dioxopentyl phosphate + H2O. It catalyses the reaction 5-methylsulfanyl-2,3-dioxopentyl phosphate + H2O = 1,2-dihydroxy-5-(methylsulfanyl)pent-1-en-3-one + phosphate. The protein operates within amino-acid biosynthesis; L-methionine biosynthesis via salvage pathway; L-methionine from S-methyl-5-thio-alpha-D-ribose 1-phosphate: step 2/6. It participates in amino-acid biosynthesis; L-methionine biosynthesis via salvage pathway; L-methionine from S-methyl-5-thio-alpha-D-ribose 1-phosphate: step 3/6. It functions in the pathway amino-acid biosynthesis; L-methionine biosynthesis via salvage pathway; L-methionine from S-methyl-5-thio-alpha-D-ribose 1-phosphate: step 4/6. The chain is Probable bifunctional methylthioribulose-1-phosphate dehydratase/enolase-phosphatase E1 from Populus trichocarpa (Western balsam poplar).